The chain runs to 227 residues: E3 ubiquitin-protein ligase RNF186 (227 aa).

The segment at 40-86 adopts an RING-type zinc-finger fold; it reads CLVCREPYSCPRLPKLLACQHAFCAICLKLLLCVQDNTWSITCPLCR. 2 helical membrane-spanning segments follow: residues 158 to 178 and 180 to 200; these read HLLL…PGVL and WVLT…CCLP.

In terms of assembly, interacts with BNIP1. Polyubiquitinated. 'Lys-29'-linked autoubiquitination leads to proteasomal degradation.

The protein resides in the endoplasmic reticulum membrane. It catalyses the reaction S-ubiquitinyl-[E2 ubiquitin-conjugating enzyme]-L-cysteine + [acceptor protein]-L-lysine = [E2 ubiquitin-conjugating enzyme]-L-cysteine + N(6)-ubiquitinyl-[acceptor protein]-L-lysine.. It functions in the pathway protein modification; protein ubiquitination. Its function is as follows. E3 ubiquitin protein ligase that is part of an apoptotic signaling pathway activated by endoplasmic reticulum stress. Stimulates the expression of proteins specific of the unfolded protein response (UPR), ubiquitinates BNIP1 and regulates its localization to the mitochondrion and induces calcium release from the endoplasmic reticulum that ultimately leads to cell apoptosis. Plays a role in the maintenance of intestinal homeostasis and clearance of enteric pathogens. Upon NOD2 stimulation, ubiquitinates the ER stress sensor activating transcription factor 6/ATF6 and promotes the unfolded protein response UPR. Participates in basal level of autophagy maintenance by regulating the ubiquitination of EPHB2 and EPHB3. Upon stimulation by ligand EFNB1, ubiquitinates EPHB2 and further recruits MAP1LC3B for autophagy induction. Controls nutrient sensing by ubiquitinating Sestrin-2/SESN2, which is an intracellular sensor of cytosolic leucine and inhibitor of mTORC1 activity. The sequence is that of E3 ubiquitin-protein ligase RNF186 from Homo sapiens (Human).